We begin with the raw amino-acid sequence, 165 residues long: Glycine cleavage system H protein, mitochondrial (165 aa).

The N-terminal 31 residues, 1–31 (MALRIWASSTAKALRLSSASRPHFSPLFRCF), are a transit peptide targeting the mitochondrion. The Lipoyl-binding domain occupies 55 to 137 (VATIGITDHA…YEDGWMIKVK (83 aa)). Lys96 is modified (N6-lipoyllysine).

Belongs to the GcvH family. In terms of assembly, the glycine cleavage system is composed of four components that only loosely associate: the P protein (EC 1.4.4.2), the T protein (EC 2.1.2.10), the L protein (EC 1.8.1.4) and the lipoyl-bearing H protein. The cofactor is (R)-lipoate. As to expression, expressed in roots, stems and leaves.

It is found in the mitochondrion. Its function is as follows. The glycine cleavage system catalyzes the degradation of glycine. The H protein shuttles the methylamine group of glycine from the P protein to the T protein. The sequence is that of Glycine cleavage system H protein, mitochondrial (GDCSH) from Flaveria trinervia (Clustered yellowtops).